The chain runs to 211 residues: MMEEITALVRETRTETGKPALDERVMAVMGKVPRHEFVPADQLPRAYQNRPLPIGHGQTISQPYIVALMTDLARVEPGHKVLEVGTGSGYQAAVMAHLARAVYTIEIIEPLGLQARQRLQKLGYDNVQVRLGDGYHGWEEHAPYDAILVTAAASHIPPPLIRQLKAGGRMVIPVGAAFMVQQLMLVEKNRDGTVSTRQILPVAFVPLTGQR.

The active site involves S61.

Belongs to the methyltransferase superfamily. L-isoaspartyl/D-aspartyl protein methyltransferase family.

The protein localises to the cytoplasm. It catalyses the reaction [protein]-L-isoaspartate + S-adenosyl-L-methionine = [protein]-L-isoaspartate alpha-methyl ester + S-adenosyl-L-homocysteine. In terms of biological role, catalyzes the methyl esterification of L-isoaspartyl residues in peptides and proteins that result from spontaneous decomposition of normal L-aspartyl and L-asparaginyl residues. It plays a role in the repair and/or degradation of damaged proteins. This is Protein-L-isoaspartate O-methyltransferase 2 from Polaromonas sp. (strain JS666 / ATCC BAA-500).